The primary structure comprises 191 residues: Cell division protein SepF (191 aa).

A disordered region spans residues 150–191; sequence TSSSPEEASPSSVSPKNTPQYSVENNTAPEPAWGNSKLSAFS. Over residues 151-164 the composition is skewed to low complexity; that stretch reads SSSPEEASPSSVSP. Positions 165–177 are enriched in polar residues; the sequence is KNTPQYSVENNTA.

This sequence belongs to the SepF family. In terms of assembly, homodimer. Interacts with FtsZ.

It is found in the cytoplasm. Functionally, cell division protein that is part of the divisome complex and is recruited early to the Z-ring. Probably stimulates Z-ring formation, perhaps through the cross-linking of FtsZ protofilaments. Its function overlaps with FtsA. In Prochlorococcus marinus (strain MIT 9312), this protein is Cell division protein SepF.